Consider the following 199-residue polypeptide: Recombination protein RecR (199 aa).

Residues 56 to 71 form a C4-type zinc finger; sequence CAICGNVSEKETCGIC. Positions 79-174 constitute a Toprim domain; sequence ATICVVEEAK…RVTRLASGLP (96 aa).

It belongs to the RecR family.

May play a role in DNA repair. It seems to be involved in an RecBC-independent recombinational process of DNA repair. It may act with RecF and RecO. The sequence is that of Recombination protein RecR from Clavibacter michiganensis subsp. michiganensis (strain NCPPB 382).